We begin with the raw amino-acid sequence, 398 residues long: Streptopain (398 aa).

The first 27 residues, 1 to 27 (MNKKKLGIRLLSLLALGGFVLANPVFA), serve as a signal peptide directing secretion. Residues 28–145 (DQNFARNEKE…TTYAGTAEIK (118 aa)) constitute a propeptide that is removed on maturation. C192 (nucleophile) is an active-site residue. The residue at position 192 (C192) is a Cysteine methyl disulfide; in zymogen form. A protein is bound by residues S282 and G339. The active-site Proton acceptor is H340. The tract at residues 368-390 (RLDALNPSALGTGGGAGGFNGYQ) is C-terminal active site loop.

Belongs to the peptidase C10 family. Monomer. Post-translationally, the mature protease is derived from the precursor sequence by cleavage, either in cis via an autocatalytic mechanism, or in trans by mature SpeB or host proteases (trypsin, plasmin or subtilisin). Maturation can involve a number of protein cleavage intermediates. Mature SpeB probably plays the most important role in protein maturation in physiological conditions. In terms of processing, methylthiolation at Cys-192 of the inactive zymogen form is probably involved in the mechanism of secretion of the proteinase into the culture fluid.

It is found in the secreted. It localises to the host extracellular space. Its subcellular location is the host cytoplasm. It carries out the reaction Preferential cleavage with hydrophobic residues at P2, P1 and P1'.. With respect to regulation, synthesized as an inactive zymogen to protect the intracellular components of the bacteria from proteolytic activity during protein production. Once secreted into the extracellular milieu, cleaved into the active protease: maturation can be mediated in cis by autocatalytic cleavage, or in trans by mature SpeB or host proteases. Protease activity is strongly inhibited by zinc and copper, which prevent its maturation into an active protease: inhibition by metal ions may be required to prevent proteolysis of streptococcal proteins. Its function is as follows. Cysteine protease that acts as a key streptococcal virulence factor by cleaving host proteins involved in immune response. Triggers inflammation by mediating cleavage of host proteins, which can both promote host pathogenesis by triggering sterile inflammation and/or restrict streptococcal infection, depending on host immune statue and infection site. Cleaves host gasdermin-A (GSDMA) in epithelial cells, promoting GSDMA activation and formation of gasdermin pores, triggering pyroptosis. Pyroptosis triggers the elimination of the infected skin cell, depriving the pathogen of its protective niche, while inducing an inflammatory response. This ultimately prevents bacterial penetration of the epithelial barrier and a subsequent systemic dissemination of the pathogen. Also mediates cleavage of the cytokine precursor interleukin-1 beta (IL1B) to its mature form, resulting in inflammation and septic shock. SpeB-mediated maturation of IL1B plays a dual role depending on infection site: while IL1B inflammatory response prevents bacterial growth during invasive skin infections, it promotes streptococcal infection of the nasopharynx by disrupting colonization resistance mediated by the microbiota. Inhibits host autophagy be catalyzing cleavage and inactivation of key autophagy factors, such as CALCOCO2, NBR1 and SQSTM1. Cleaves and inhibits a number of complement factors, such as C2, C3-beta chain of C3, C4, C5 or SERPING1, thereby promoting evasion of host immunity. May also impair adaptive immunity by catalyzing cleavage and degradation of host immunoglobulins to promote immune system evasion; the relevance of this activity is however unsure in vivo. Catalyzes maturation and release of the peptide hormone bradykinin from the precursor Kininogen-1 (KNG1) to produce hypotension during septic shock. Also involved in bacterial translocation across the host epithelial barrier by mediating cleavage and degradation of host epithelial junction proteins, such as CDH1 and OCLN. Additionally, has been involved in degradation of fibronectin and vitronectin, two host extracellular matrix proteins involved in tissue integrity. Also able to catalyze cleavage and degradation of streptococcal proteins, such as C5a peptidase, EndoS or SmeZ. Degradation of streptococcal proteins is however strictly regulated to preserve integrity of other virulence factors. The chain is Streptopain (speB) from Streptococcus pyogenes serotype M3 (strain ATCC BAA-595 / MGAS315).